The sequence spans 348 residues: tRNA N6-adenosine threonylcarbamoyltransferase (348 aa).

Residues H119 and H123 each coordinate Fe cation. Substrate contacts are provided by residues 141–145, D174, G187, D191, and N280; that span reads LVSGG. D310 lines the Fe cation pocket.

Belongs to the KAE1 / TsaD family. Fe(2+) is required as a cofactor.

It localises to the cytoplasm. It catalyses the reaction L-threonylcarbamoyladenylate + adenosine(37) in tRNA = N(6)-L-threonylcarbamoyladenosine(37) in tRNA + AMP + H(+). Its function is as follows. Required for the formation of a threonylcarbamoyl group on adenosine at position 37 (t(6)A37) in tRNAs that read codons beginning with adenine. Is involved in the transfer of the threonylcarbamoyl moiety of threonylcarbamoyl-AMP (TC-AMP) to the N6 group of A37, together with TsaE and TsaB. TsaD likely plays a direct catalytic role in this reaction. This Enterococcus faecalis (strain ATCC 700802 / V583) protein is tRNA N6-adenosine threonylcarbamoyltransferase.